A 212-amino-acid polypeptide reads, in one-letter code: Ras-related protein Rab-43 (212 aa).

GTP is bound at residue 25–32 (GDASVGKT). Positions 47 to 55 (QGSTIGVDF) match the Effector region motif. S49 carries the phosphoserine modification. Position 73-77 (73-77 (DTAGQ)) interacts with GTP. The residue at position 82 (T82) is a Phosphothreonine; by LRRK2. GTP contacts are provided by residues 131-134 (NKSD) and 163-164 (AK). Phosphoserine is present on S193. 2 S-geranylgeranyl cysteine lipidation sites follow: C210 and C212. C212 carries the post-translational modification Cysteine methyl ester.

Belongs to the small GTPase superfamily. Rab family. In terms of assembly, interacts with GDI1, GDI2, CHM and CHML; phosphorylation at Thr-82 disrupts these interactions. Widely expressed in brain, testis, lung, heart, ovary, colon, kidney, uterus and spleen but not in liver.

The protein resides in the cytoplasmic vesicle. It is found in the phagosome. Its subcellular location is the phagosome membrane. It localises to the golgi apparatus. The protein localises to the trans-Golgi network membrane. The protein resides in the trans-Golgi network. Functionally, the small GTPases Rab are key regulators of intracellular membrane trafficking, from the formation of transport vesicles to their fusion with membranes. Rabs cycle between an inactive GDP-bound form and an active GTP-bound form that is able to recruit to membranes different set of downstream effectors directly responsible for vesicle formation, movement, tethering and fusion. The low intrinsic GTPase activity of RAB43 is activated by USP6NL. Involved in retrograde transport from the endocytic pathway to the Golgi apparatus. Involved in the transport of Shiga toxin from early and recycling endosomes to the trans-Golgi network. Required for the structural integrity of the Golgi complex. Plays a role in the maturation of phagosomes that engulf pathogens, such as S.aureus and M.tuberculosis. The chain is Ras-related protein Rab-43 (RAB43) from Homo sapiens (Human).